A 35-amino-acid polypeptide reads, in one-letter code: Bacteriocin lactococcin-G subunit beta (35 aa).

Bacteriocin activity requires interaction of alpha and beta peptides in a molar ratio of 7:1 or 8:1 respectively.

Kills Lactococci. In Lactococcus lactis subsp. lactis (Streptococcus lactis), this protein is Bacteriocin lactococcin-G subunit beta.